Here is a 281-residue protein sequence, read N- to C-terminus: MGENMIKSEDLVFKYVNAEEQTEKVAINHVSMEVKKGEFLVILGHNGSGKSTMAKHMNALLLPSGGKMYVDGLDTSDIENLWEVRRRAGMVFQNPDNQLVATIVEEDVAFGPENLGVDPKEIRERVDDSLKAVGMYEYRKHAPHLLSGGQKQRIAIAGILAMRPKCIVLDEPTAMLDPSGRNEVMKTIKEVNKKFGITIILITHYMDEAAQADRIIVMDKGEKVMEGVPREIFSQVEKIKSIGLDVPQVTELAYELQKEGVDISTEILNIDEMVNALCQLK.

Residues 6–245 enclose the ABC transporter domain; the sequence is IKSEDLVFKY…VEKIKSIGLD (240 aa). Position 44–51 (44–51) interacts with ATP; that stretch reads GHNGSGKS.

It belongs to the ABC transporter superfamily. Energy-coupling factor EcfA family. Forms a stable energy-coupling factor (ECF) transporter complex composed of 2 membrane-embedded substrate-binding proteins (S component), 2 ATP-binding proteins (A component) and 2 transmembrane proteins (T component).

Its subcellular location is the cell membrane. Its function is as follows. ATP-binding (A) component of a common energy-coupling factor (ECF) ABC-transporter complex. Unlike classic ABC transporters this ECF transporter provides the energy necessary to transport a number of different substrates. The sequence is that of Energy-coupling factor transporter ATP-binding protein EcfA1 from Clostridium perfringens (strain ATCC 13124 / DSM 756 / JCM 1290 / NCIMB 6125 / NCTC 8237 / Type A).